A 274-amino-acid chain; its full sequence is NH(3)-dependent NAD(+) synthetase (274 aa).

46–53 is an ATP binding site; sequence GISGGQDS. D52 is a binding site for Mg(2+). R140 provides a ligand contact to deamido-NAD(+). T160 serves as a coordination point for ATP. E165 lines the Mg(2+) pocket. The deamido-NAD(+) site is built by K173 and D180. 2 residues coordinate ATP: K189 and T211. 260-261 contributes to the deamido-NAD(+) binding site; sequence HK.

It belongs to the NAD synthetase family. In terms of assembly, homodimer.

The catalysed reaction is deamido-NAD(+) + NH4(+) + ATP = AMP + diphosphate + NAD(+) + H(+). It participates in cofactor biosynthesis; NAD(+) biosynthesis; NAD(+) from deamido-NAD(+) (ammonia route): step 1/1. Catalyzes the ATP-dependent amidation of deamido-NAD to form NAD. Uses ammonia as a nitrogen source. The chain is NH(3)-dependent NAD(+) synthetase from Streptococcus uberis (strain ATCC BAA-854 / 0140J).